A 106-amino-acid chain; its full sequence is Large ribosomal subunit protein uL24 (106 aa).

The protein belongs to the universal ribosomal protein uL24 family. Part of the 50S ribosomal subunit.

One of two assembly initiator proteins, it binds directly to the 5'-end of the 23S rRNA, where it nucleates assembly of the 50S subunit. Its function is as follows. One of the proteins that surrounds the polypeptide exit tunnel on the outside of the subunit. The polypeptide is Large ribosomal subunit protein uL24 (Bordetella petrii (strain ATCC BAA-461 / DSM 12804 / CCUG 43448)).